We begin with the raw amino-acid sequence, 956 residues long: MSMTASSSTPRPTPKYDDALILNLSSAAKIERIVDKVKSLSRERFAPEDFSFQWFRSISRVERTTDNNPSAATTAAATTTVHSSASSSAAAAASSEAGGTRVPCVDRWPFFPFRALLVTGTAGAGKTSSIQVLAANLDCVITGTTVIAAQNLSAILNRTRSAQVKTIYRVFGFVSKHVPLADSAVSHETLERYRVCEPHEETTIQRLQINDLLAYWPVIADIVDKCLNMWERKAASASAAAAAAACEDLSELCESNIIVIDECGLMLRYMLQVVVFFYYFYNALGDTRLYRERRVPCIICVGSPTQTEALESRYDHYTQNKSVRKGVDVLSALIQNEVLINYCDIADNWVMFIHNKRCTDLDFGDLLKYMEFGIPLKEEHVAYVDRFVRPPSSIRNPSYAAEMTRLFLSHVEVQAYFKRLHEQIRLSERHRLFDLPVYCVVNNRAYQELCELADPLGDSPQPVELWFRQNLARIINYSQFVDHNLSSEITKEALRPAADVVATNNSSVQAHGGGGSVIGSTGGNDETAFFQDDDTTTAPDSRETLLTLRITYIKGSSVGVNSKVRACVIGYQGTVERFVDILQKDTFIERTPCEQAAYAYSLVSGLLFSAMYYFYVSPYTTEEMLRELARVELPDVSSLCAAAAATAAAPAWSGGENPINNHVDADSSQGGQSVPVSQRMEHGQEETHDIPCLSNHHDDSDAITDAELMDHTSLYADPFFLKYVKPPSLALLSFEETVHMYTTFRDIFLKRYQLMQRLTGGRFATLPLVTYNRRNVVFKANCQISSQTGSFVGMLSHVSPAQTYTLEGYTSDNVLSLPSDRHRIHPEVVQRGLSRLVLRDALGFLFVLDVNVSRFVESAQGKSLHVCTTVDYGLTSRTAMTIAKSQGLSLEKVAVDFGDHPKNLKMSHIYVAMSRVTDPEHLMMNVNPLRLPYEKNTAITPYICRALKDKRTTLIF.

120–127 (GTAGAGKT) contributes to the ATP binding site. Residues 658–694 (PINNHVDADSSQGGQSVPVSQRMEHGQEETHDIPCLS) form a disordered region. The span at 667–678 (SSQGGQSVPVSQ) shows a compositional bias: low complexity. Over residues 679–694 (RMEHGQEETHDIPCLS) the composition is skewed to basic and acidic residues.

Belongs to the herpesviridae helicase family. In terms of assembly, associates with the primase and the primase-associated factor to form the helicase-primase complex.

Its subcellular location is the host nucleus. Functionally, component of the helicase/primase complex. Unwinds the DNA at the replication forks and generates single-stranded DNA for both leading and lagging strand synthesis. The primase synthesizes short RNA primers on the lagging strand that the polymerase elongates using dNTPs. Possesses helicase-like motifs and therefore may act as the helicase subunit of the complex. In Human cytomegalovirus (strain AD169) (HHV-5), this protein is DNA replication helicase.